A 737-amino-acid polypeptide reads, in one-letter code: uncharacterized protein (737 aa).

The next 7 membrane-spanning stretches (helical) occupy residues 11-31, 36-56, 60-80, 118-138, 142-162, 164-184, and 200-220; these read LSLL…LRPL, ETKH…LTFF, WFVT…ILFY, TLLF…WVIY, ILFF…FTPY, ATFA…LLYL, and VLKW…FGLA. Residues 556 to 611 are disordered; sequence PAQFTSSDTKDSGSDSSSSPKKAKEKQKEEKKQPQKEEKQKEKREPAVSKKPSASH. Residues 581 to 603 are compositionally biased toward basic and acidic residues; that stretch reads KQKEEKKQPQKEEKQKEKREPAV. A helical membrane pass occupies residues 618-638; sequence LYAALAVLAVLLVAAVLLYVF.

The protein localises to the cell membrane. This is an uncharacterized protein from Bacillus subtilis (strain 168).